The chain runs to 321 residues: Lipoyl synthase (321 aa).

[4Fe-4S] cluster contacts are provided by Cys-68, Cys-73, Cys-79, Cys-94, Cys-98, Cys-101, and Ser-308. The region spanning 80–297 is the Radical SAM core domain; the sequence is FNHGTATFMI…KAEAMAMGFT (218 aa).

It belongs to the radical SAM superfamily. Lipoyl synthase family. It depends on [4Fe-4S] cluster as a cofactor.

The protein resides in the cytoplasm. The enzyme catalyses [[Fe-S] cluster scaffold protein carrying a second [4Fe-4S](2+) cluster] + N(6)-octanoyl-L-lysyl-[protein] + 2 oxidized [2Fe-2S]-[ferredoxin] + 2 S-adenosyl-L-methionine + 4 H(+) = [[Fe-S] cluster scaffold protein] + N(6)-[(R)-dihydrolipoyl]-L-lysyl-[protein] + 4 Fe(3+) + 2 hydrogen sulfide + 2 5'-deoxyadenosine + 2 L-methionine + 2 reduced [2Fe-2S]-[ferredoxin]. It functions in the pathway protein modification; protein lipoylation via endogenous pathway; protein N(6)-(lipoyl)lysine from octanoyl-[acyl-carrier-protein]: step 2/2. Functionally, catalyzes the radical-mediated insertion of two sulfur atoms into the C-6 and C-8 positions of the octanoyl moiety bound to the lipoyl domains of lipoate-dependent enzymes, thereby converting the octanoylated domains into lipoylated derivatives. The sequence is that of Lipoyl synthase from Pectobacterium atrosepticum (strain SCRI 1043 / ATCC BAA-672) (Erwinia carotovora subsp. atroseptica).